The chain runs to 150 residues: Phosphoribosyl-AMP cyclohydrolase (150 aa).

A Mg(2+)-binding site is contributed by D93. Residue C94 coordinates Zn(2+). 2 residues coordinate Mg(2+): D95 and D97. C112 and C119 together coordinate Zn(2+).

Belongs to the PRA-CH family. Homodimer. It depends on Mg(2+) as a cofactor. Requires Zn(2+) as cofactor.

Its subcellular location is the cytoplasm. The enzyme catalyses 1-(5-phospho-beta-D-ribosyl)-5'-AMP + H2O = 1-(5-phospho-beta-D-ribosyl)-5-[(5-phospho-beta-D-ribosylamino)methylideneamino]imidazole-4-carboxamide. Its pathway is amino-acid biosynthesis; L-histidine biosynthesis; L-histidine from 5-phospho-alpha-D-ribose 1-diphosphate: step 3/9. Functionally, catalyzes the hydrolysis of the adenine ring of phosphoribosyl-AMP. The protein is Phosphoribosyl-AMP cyclohydrolase of Rhizobium leguminosarum bv. trifolii (strain WSM2304).